Consider the following 243-residue polypeptide: 1-(5-phosphoribosyl)-5-[(5-phosphoribosylamino)methylideneamino] imidazole-4-carboxamide isomerase (243 aa).

The active-site Proton acceptor is the D8. The active-site Proton donor is D129.

The protein belongs to the HisA/HisF family.

It is found in the cytoplasm. The enzyme catalyses 1-(5-phospho-beta-D-ribosyl)-5-[(5-phospho-beta-D-ribosylamino)methylideneamino]imidazole-4-carboxamide = 5-[(5-phospho-1-deoxy-D-ribulos-1-ylimino)methylamino]-1-(5-phospho-beta-D-ribosyl)imidazole-4-carboxamide. Its pathway is amino-acid biosynthesis; L-histidine biosynthesis; L-histidine from 5-phospho-alpha-D-ribose 1-diphosphate: step 4/9. The protein is 1-(5-phosphoribosyl)-5-[(5-phosphoribosylamino)methylideneamino] imidazole-4-carboxamide isomerase of Moorella thermoacetica (strain ATCC 39073 / JCM 9320).